We begin with the raw amino-acid sequence, 147 residues long: Small ribosomal subunit protein uS12 (147 aa).

Positions 1 to 22 (MPTINQLVRKPRKSKIEKSDSP) are disordered. 3-methylthioaspartic acid is present on aspartate 102.

The protein belongs to the universal ribosomal protein uS12 family. As to quaternary structure, part of the 30S ribosomal subunit. Contacts proteins S8 and S17. May interact with IF1 in the 30S initiation complex.

In terms of biological role, with S4 and S5 plays an important role in translational accuracy. Its function is as follows. Interacts with and stabilizes bases of the 16S rRNA that are involved in tRNA selection in the A site and with the mRNA backbone. Located at the interface of the 30S and 50S subunits, it traverses the body of the 30S subunit contacting proteins on the other side and probably holding the rRNA structure together. The combined cluster of proteins S8, S12 and S17 appears to hold together the shoulder and platform of the 30S subunit. The chain is Small ribosomal subunit protein uS12 from Streptococcus pyogenes serotype M12 (strain MGAS2096).